The chain runs to 21 residues: Serine protease inhibitor 1 (21 aa).

One can recognise a Pacifastin domain in the interval 1–21 (EQQCTPGQTKKEDCNNCTSGD). The disordered stretch occupies residues 1 to 21 (EQQCTPGQTKKEDCNNCTSGD).

It belongs to the protease inhibitor I19 family. As to expression, expressed in hemolymph.

It is found in the secreted. Its function is as follows. Probable serine protease inhibitor. The sequence is that of Serine protease inhibitor 1 from Melanoplus sanguinipes (Migratory grasshopper).